We begin with the raw amino-acid sequence, 210 residues long: Imidazoleglycerol-phosphate dehydratase (210 aa).

The segment at 1–23 is disordered; the sequence is MNDSLLSNGHAPPLRQATVDRQT.

This sequence belongs to the imidazoleglycerol-phosphate dehydratase family.

The protein resides in the cytoplasm. It catalyses the reaction D-erythro-1-(imidazol-4-yl)glycerol 3-phosphate = 3-(imidazol-4-yl)-2-oxopropyl phosphate + H2O. Its pathway is amino-acid biosynthesis; L-histidine biosynthesis; L-histidine from 5-phospho-alpha-D-ribose 1-diphosphate: step 6/9. The protein is Imidazoleglycerol-phosphate dehydratase of Thermosynechococcus vestitus (strain NIES-2133 / IAM M-273 / BP-1).